A 576-amino-acid chain; its full sequence is Alpha-bisabolol synthase (576 aa).

(2E,6E)-farnesyl diphosphate contacts are provided by arginine 286, aspartate 323, aspartate 327, arginine 466, and asparagine 469. The Mg(2+) site is built by aspartate 323 and aspartate 327. Residues 323 to 327 (DDVYD) carry the DDXXD motif motif. Mg(2+) is bound by residues asparagine 469, threonine 473, and glutamate 477.

The protein belongs to the terpene synthase family. Tpsb subfamily. Mg(2+) serves as cofactor. Requires Mn(2+) as cofactor.

Produces a mixture of beta-bisabolene and alpha-bisabolol, along with traces of alpha-bisabolene and farnesene isomers from (2E,6E)-farnesyl diphosphate in fragrance biosynthesis. This is Alpha-bisabolol synthase from Santalum spicatum (Australian sandalwood).